Reading from the N-terminus, the 481-residue chain is 7-deoxyloganetin glucosyltransferase (481 aa).

The Proton acceptor role is filled by His-22. An anthocyanidin is bound at residue His-22. Catalysis depends on Asp-126, which acts as the Charge relay. 7 residues coordinate UDP-alpha-D-glucose: Thr-148, Gln-363, His-378, Trp-381, Asn-382, Ser-383, and Glu-386. Ala-401 contributes to the an anthocyanidin binding site. Positions 402 and 403 each coordinate UDP-alpha-D-glucose.

The protein belongs to the UDP-glycosyltransferase family. As to expression, ubiquitous. Very low expression in stems.

The enzyme catalyses 7-deoxyloganetin + UDP-alpha-D-glucose = 7-deoxyloganin + UDP + H(+). Its function is as follows. Iridoid glucosyltransferase acting on genipin and 7-deoxyloganetin. No activity with 7-deoxyloganetic acid. Involved in geniposide biosynthesis. The chain is 7-deoxyloganetin glucosyltransferase (UGT85A24) from Gardenia jasminoides (Cape jasmine).